The sequence spans 158 residues: Glutathione peroxidase homolog BsaA (158 aa).

Cys-36 is an active-site residue.

The protein belongs to the glutathione peroxidase family.

The polypeptide is Glutathione peroxidase homolog BsaA (bsaA) (Staphylococcus epidermidis (strain ATCC 12228 / FDA PCI 1200)).